Here is a 317-residue protein sequence, read N- to C-terminus: Glycine--tRNA ligase alpha subunit (317 aa).

The protein belongs to the class-II aminoacyl-tRNA synthetase family. In terms of assembly, tetramer of two alpha and two beta subunits.

Its subcellular location is the cytoplasm. The catalysed reaction is tRNA(Gly) + glycine + ATP = glycyl-tRNA(Gly) + AMP + diphosphate. This chain is Glycine--tRNA ligase alpha subunit, found in Leptothrix cholodnii (strain ATCC 51168 / LMG 8142 / SP-6) (Leptothrix discophora (strain SP-6)).